The following is a 117-amino-acid chain: uncharacterized protein (117 aa).

This is an uncharacterized protein from Fowlpox virus (strain NVSL) (FPV).